We begin with the raw amino-acid sequence, 169 residues long: Der GTPase-activating protein YihI (169 aa).

Disordered stretches follow at residues 1–98 and 144–169; these read MKPS…PQAE and GLSY…LRGN. Residues 10–19 are compositionally biased toward basic residues; it reads SKGHAKARRK. Positions 20 to 30 are enriched in basic and acidic residues; sequence TREELDQEARD. Residues 31-40 are compositionally biased toward basic residues; sequence RKRQKKRRGH. Over residues 49 to 58 the composition is skewed to polar residues; the sequence is GNTTSGSKGQ. Residues 147-159 show a composition bias toward acidic residues; the sequence is YDDDEEEEEDEKQ. The span at 160-169 shows a compositional bias: basic and acidic residues; that stretch reads EDMMRLLRGN.

Belongs to the YihI family. As to quaternary structure, interacts with Der.

A GTPase-activating protein (GAP) that modifies Der/EngA GTPase function. May play a role in ribosome biogenesis. The polypeptide is Der GTPase-activating protein YihI (Escherichia coli O139:H28 (strain E24377A / ETEC)).